The primary structure comprises 247 residues: ATP synthase subunit C lysine N-methyltransferase (247 aa).

At Met1 the chain carries N-acetylmethionine. Residues 1–12 are compositionally biased toward basic and acidic residues; it reads MERVGTPEEERQ. Residues 1 to 25 are disordered; it reads MERVGTPEEERQAGPVLPTSLESDS. The helical transmembrane segment at 34-54 threads the bilayer; the sequence is LITGVVGGALLTVYAVATPFI. Residues 51 to 85 are required for mitochondrial location; it reads TPFITPALRKVCLPFVPATSKQVENVVRMLRHRRG. The tract at residues 209–247 is disordered; sequence QRGRGGRPNQEWVGQKNLSETAGLQASSSETRSKLLDVE. Positions 224–238 are enriched in polar residues; the sequence is KNLSETAGLQASSSE.

This sequence belongs to the ANT/ATPSC lysine N-methyltransferase family. Ubiquitously expressed.

It localises to the mitochondrion membrane. It carries out the reaction L-lysyl-[protein] + 3 S-adenosyl-L-methionine = N(6),N(6),N(6)-trimethyl-L-lysyl-[protein] + 3 S-adenosyl-L-homocysteine + 3 H(+). In terms of biological role, mitochondrial protein-lysine N-methyltransferase that trimethylates ATP synthase subunit C, ATP5MC1 and ATP5MC2. Trimethylation is required for proper incorporation of the C subunit into the ATP synthase complex and mitochondrial respiration. Promotes chronic pain. Involved in persistent inflammatory and neuropathic pain: methyltransferase activity in the mitochondria of sensory neurons promotes chronic pain via a pathway that depends on the production of reactive oxygen species (ROS) and on the engagement of spinal cord microglia. This is ATP synthase subunit C lysine N-methyltransferase from Mus musculus (Mouse).